A 223-amino-acid chain; its full sequence is GrpE protein homolog, mitochondrial (223 aa).

This sequence belongs to the GrpE family. Component of the PAM complex, at least composed of mtHsp70, mge1, tim44, pam16, pam17 and pam18.

The protein resides in the mitochondrion matrix. Essential component of the PAM complex, a complex required for the translocation of transit peptide-containing proteins from the inner membrane into the mitochondrial matrix in an ATP-dependent manner. Seems to control the nucleotide-dependent binding of ssc1 to substrate proteins. This is GrpE protein homolog, mitochondrial (mge1) from Schizosaccharomyces pombe (strain 972 / ATCC 24843) (Fission yeast).